The chain runs to 127 residues: Large ribosomal subunit protein bL12 (127 aa).

The protein belongs to the bacterial ribosomal protein bL12 family. As to quaternary structure, homodimer. Part of the ribosomal stalk of the 50S ribosomal subunit. Forms a multimeric L10(L12)X complex, where L10 forms an elongated spine to which 2 to 4 L12 dimers bind in a sequential fashion. Binds GTP-bound translation factors.

Forms part of the ribosomal stalk which helps the ribosome interact with GTP-bound translation factors. Is thus essential for accurate translation. This Rhizobium etli (strain CIAT 652) protein is Large ribosomal subunit protein bL12.